A 188-amino-acid chain; its full sequence is RxLR effector protein Avh241 (188 aa).

The signal sequence occupies residues 1–16 (MRQYCLLLIVLALAAA). Positions 43–58 (RLLRSEPQDEDTFEDR) match the RxLR-dEER motif. Positions 73–78 (GAAKAK) match the Host plasma membrane localization motif motif.

The protein belongs to the RxLR effector family.

Its subcellular location is the secreted. It localises to the host cell membrane. Its function is as follows. Effector that triggers cell death in a variety of plant species (including tobacco, tomato and soybean), regardless of the Rps genes present. Avh241 interacts with the plant immune system via at least two different mechanisms, one recognized by plants dependent on subcellular localization and one promoting infection independent on membrane localization. The cell death triggered by Avh241 in N.benthamiana requires the two host mitogen-activated protein kinases, MEK2 and WIPK. The sequence is that of RxLR effector protein Avh241 from Phytophthora sojae (strain P6497) (Soybean stem and root rot agent).